Consider the following 80-residue polypeptide: Metallothionein-like protein 1 (80 aa).

It belongs to the metallothionein superfamily. Type 15 family.

In terms of biological role, metallothioneins have a high content of cysteine residues that bind various heavy metals. This chain is Metallothionein-like protein 1 (METAL1), found in Coffea arabica (Arabian coffee).